A 629-amino-acid polypeptide reads, in one-letter code: tRNA uridine 5-carboxymethylaminomethyl modification enzyme MnmG (629 aa).

Residues 14–19 (GAGHAG), Val126, and Ser181 each bind FAD. 273–287 (GPRYCPSIEDKVVRF) contacts NAD(+). Position 370 (Gln370) interacts with FAD.

Belongs to the MnmG family. Homodimer. Heterotetramer of two MnmE and two MnmG subunits. Requires FAD as cofactor.

It localises to the cytoplasm. Functionally, NAD-binding protein involved in the addition of a carboxymethylaminomethyl (cmnm) group at the wobble position (U34) of certain tRNAs, forming tRNA-cmnm(5)s(2)U34. This Geobacillus kaustophilus (strain HTA426) protein is tRNA uridine 5-carboxymethylaminomethyl modification enzyme MnmG.